We begin with the raw amino-acid sequence, 354 residues long: Serum paraoxonase/lactonase 3 (354 aa).

An intrachain disulfide couples Cys42 to Cys352. Asn50 is a glycosylation site (N-linked (GlcNAc...) asparagine). 2 residues coordinate Ca(2+): Glu53 and Asp54. His114 serves as the catalytic Proton acceptor. Ile116 contributes to the Ca(2+) binding site. Ser165 is modified (phosphoserine). Ca(2+) is bound by residues Asn167, Asp168, Asn223, Asp268, and Asn269. N-linked (GlcNAc...) asparagine glycans are attached at residues Asn269 and Asn323.

The protein belongs to the paraoxonase family. As to quaternary structure, homodimer. Ca(2+) serves as cofactor. In terms of processing, glycosylated. The signal sequence is not cleaved.

Its subcellular location is the secreted. It is found in the extracellular space. The enzyme catalyses a phenyl acetate + H2O = a phenol + acetate + H(+). It carries out the reaction An aryl dialkyl phosphate + H2O = dialkyl phosphate + an aryl alcohol.. The catalysed reaction is an N-acyl-L-homoserine lactone + H2O = an N-acyl-L-homoserine + H(+). Its function is as follows. Has low activity towards the organophosphate paraxon and aromatic carboxylic acid esters. Rapidly hydrolyzes lactones such as statin prodrugs (e.g. lovastatin). Hydrolyzes aromatic lactones and 5- or 6-member ring lactones with aliphatic substituents but not simple lactones or those with polar substituents. The sequence is that of Serum paraoxonase/lactonase 3 (Pon3) from Rattus norvegicus (Rat).